We begin with the raw amino-acid sequence, 315 residues long: AT-hook motif nuclear-localized protein 19 (315 aa).

Residues 1–25 (MANPWWTGQVNLSGLETTPPGSSQL) are compositionally biased toward polar residues. 2 disordered regions span residues 1–104 (MANP…RDSP) and 239–285 (EEEA…YNMP). Residues 61-74 (DNLSGDDHEPREGA) show a composition bias toward basic and acidic residues. The a.T hook DNA-binding region spans 80–92 (RRPRGRPAGSKNK). Residues 104–248 (PNALKSHVME…EEEAAERGGG (145 aa)) enclose the PPC domain. Residues 245–276 (RGGGGGSGGVVPGQLGGGGSPLSSGAGGGDGN) show a composition bias toward gly residues.

In terms of tissue distribution, slightly expressed in roots.

The protein resides in the nucleus. Transcription factor that specifically binds AT-rich DNA sequences related to the nuclear matrix attachment regions (MARs). Negatively regulates plant innate immunity (PTI) to pathogens through the down-regulation of the PAMP-triggered FRK1 expression. Positively regulates defense against fungal Verticillium infection. The polypeptide is AT-hook motif nuclear-localized protein 19 (Arabidopsis thaliana (Mouse-ear cress)).